Reading from the N-terminus, the 272-residue chain is Putative hydro-lyase Rpal_1947 (272 aa).

The protein belongs to the D-glutamate cyclase family.

The protein is Putative hydro-lyase Rpal_1947 of Rhodopseudomonas palustris (strain TIE-1).